A 308-amino-acid chain; its full sequence is UPF0282 protein PYRAB09800 (308 aa).

This sequence belongs to the UPF0282 family.

This is UPF0282 protein PYRAB09800 from Pyrococcus abyssi (strain GE5 / Orsay).